A 451-amino-acid polypeptide reads, in one-letter code: Tapasin-related protein (451 aa).

The first 20 residues, 1–20, serve as a signal peptide directing secretion; the sequence is MGLEPSWYLLLCLAVSGAAG. Residues 21-412 lie on the Lumenal side of the membrane; that stretch reads TDPPTAPTTA…RVLPNPEQRG (392 aa). The 106-residue stretch at 196-301 folds into the Ig-like V-type domain; sequence FQVTSETQTL…TSLYQAQQIM (106 aa). 2 disulfides stabilise this stretch: Cys217–Cys288 and Cys326–Cys387. Residues Asn270 and Asn277 are each glycosylated (N-linked (GlcNAc...) asparagine). The region spanning 302–399 is the Ig-like C1-type domain; it reads PLNILAPPKI…AHVSLEEPLT (98 aa). The chain crosses the membrane as a helical span at residues 413-433; the sequence is TLGVIFASIIFLSALLLFLGL. The Cytoplasmic segment spans residues 434 to 451; the sequence is HRQQASSSRSTRPMRHSG.

As to quaternary structure, interacts with peptide-free HLA-A*02-B2M complexes or those loaded with low affinity peptides, likely facilitating peptide exchange onto higher affinity peptides. Interacts with MR1 in a ligand-independent way; this interaction may stabilize MR1 pool and facilitate ligand loading and dissociation. Widely expressed.

It is found in the cell membrane. It localises to the endoplasmic reticulum membrane. The protein resides in the microsome membrane. Its subcellular location is the golgi apparatus membrane. In terms of biological role, component of the antigen processing and presentation pathway, which binds to MHC class I coupled with beta2-microglobulin/B2M. Association between TAPBPR and MHC class I occurs in the absence of a functional peptide-loading complex (PLC). Expression seems to slow down and down-regulate MHC class I surface expression. The sequence is that of Tapasin-related protein (Tapbpl) from Mus musculus (Mouse).